The following is a 161-amino-acid chain: UPF0178 protein PXO_00400 (161 aa).

Belongs to the UPF0178 family.

The chain is UPF0178 protein PXO_00400 from Xanthomonas oryzae pv. oryzae (strain PXO99A).